The primary structure comprises 262 residues: Small ribosomal subunit protein eS1 (262 aa).

A compositionally biased stretch (basic residues) spans 1–18 (MAVGKNKRISKGKKGSKK). A disordered region spans residues 1–20 (MAVGKNKRISKGKKGSKKKT).

It belongs to the eukaryotic ribosomal protein eS1 family. As to quaternary structure, component of the small ribosomal subunit. Mature ribosomes consist of a small (40S) and a large (60S) subunit. The 40S subunit contains about 33 different proteins and 1 molecule of RNA (18S). The 60S subunit contains about 49 different proteins and 3 molecules of RNA (25S, 5.8S and 5S).

The protein resides in the cytoplasm. This chain is Small ribosomal subunit protein eS1, found in Oryza sativa subsp. japonica (Rice).